The primary structure comprises 92 residues: Small ribosomal subunit protein uS19 (92 aa).

This sequence belongs to the universal ribosomal protein uS19 family.

Functionally, protein S19 forms a complex with S13 that binds strongly to the 16S ribosomal RNA. This is Small ribosomal subunit protein uS19 from Rhizobium johnstonii (strain DSM 114642 / LMG 32736 / 3841) (Rhizobium leguminosarum bv. viciae).